Here is a 314-residue protein sequence, read N- to C-terminus: BTB/POZ domain-containing adapter for CUL3-mediated RhoA degradation protein 2 (314 aa).

The region spanning Lys32–Lys100 is the BTB domain.

The protein belongs to the BACURD family. Component of the BCR(TNFAIP1) E3 ubiquitin ligase complex, at least composed of CUL3, TNFAIP1/BACURD2 and RBX1.

Its subcellular location is the cytoplasm. It localises to the nucleus. It is found in the endosome. Its pathway is protein modification; protein ubiquitination. Its function is as follows. Substrate-specific adapter of a BCR (BTB-CUL3-RBX1) E3 ubiquitin-protein ligase complex involved in regulation of cytoskeleton structure. The BCR(TNFAIP1) E3 ubiquitin ligase complex mediates the ubiquitination of target proteins, leading to their degradation by the proteasome. This Gallus gallus (Chicken) protein is BTB/POZ domain-containing adapter for CUL3-mediated RhoA degradation protein 2 (TNFAIP1).